Here is a 125-residue protein sequence, read N- to C-terminus: Conopressin-conophysin, isoform 1 (125 aa).

The first 22 residues, 1 to 22 (MQMGRPTLLPCLLLLLVLSTQA), serve as a signal peptide directing secretion. Cys23 and Cys28 are oxidised to a cystine. Gly31 is modified (glycine amide). Positions 32–39 (GKRDVHMI) are excised as a propeptide. 7 disulfides stabilise this stretch: Cys45–Cys85, Cys48–Cys59, Cys53–Cys75, Cys60–Cys65, Cys92–Cys112, Cys104–Cys124, and Cys113–Cys118.

The protein belongs to the vasopressin/oxytocin family. Expressed by the venom gland.

It is found in the secreted. Its function is as follows. Targets vasopressin-oxytocin related receptors. This chain is Conopressin-conophysin, isoform 1, found in Conus monile (Necklace cone).